A 194-amino-acid polypeptide reads, in one-letter code: Imidazoleglycerol-phosphate dehydratase (194 aa).

It belongs to the imidazoleglycerol-phosphate dehydratase family.

The protein localises to the cytoplasm. It catalyses the reaction D-erythro-1-(imidazol-4-yl)glycerol 3-phosphate = 3-(imidazol-4-yl)-2-oxopropyl phosphate + H2O. The protein operates within amino-acid biosynthesis; L-histidine biosynthesis; L-histidine from 5-phospho-alpha-D-ribose 1-diphosphate: step 6/9. The protein is Imidazoleglycerol-phosphate dehydratase of Caldanaerobacter subterraneus subsp. tengcongensis (strain DSM 15242 / JCM 11007 / NBRC 100824 / MB4) (Thermoanaerobacter tengcongensis).